A 468-amino-acid polypeptide reads, in one-letter code: Protein ABHD15 (468 aa).

The first 23 residues, 1 to 23, serve as a signal peptide directing secretion; it reads MPPWGAALALILAVLALLGLLGP. Residues 33-61 are disordered; the sequence is VGERTLPGAQDRDDGEEADGGGPADQFSD. Residues Asp-360 and His-391 each act as charge relay system in the active site. Ser-434 carries the phosphoserine modification.

It belongs to the AB hydrolase superfamily. AB hydrolase 4 family. Interacts with PDE3B; this interaction regulates PDE3B's stability and expression and, thereby, impacts the antilipolytic action of insulin.

Its subcellular location is the secreted. Functionally, may regulate adipocyte lipolysis and liver lipid accumulation. This Homo sapiens (Human) protein is Protein ABHD15.